We begin with the raw amino-acid sequence, 288 residues long: Ankyrin repeat and SOCS box protein 8 (288 aa).

Phosphoserine is present on Ser17. ANK repeat units lie at residues 52–81 (GTLK…EVNA), 85–113 (YNRT…NPNA), 117–146 (NRDT…SVNA), and 150–179 (NNDT…EVRV). The 54-residue stretch at 235–288 (QLCEKLTVLCSAPGTLKTLARYAVRRSLGLQYLPDAVKGLPLPASLKEYLLLLE) folds into the SOCS box domain.

Belongs to the ankyrin SOCS box (ASB) family. As to quaternary structure, interacts with TBK1; this interaction promotes TBK1 proteasomal degradation. Phosphorylated by TBK1.

The protein resides in the cytoplasm. The protein operates within protein modification; protein ubiquitination. Functionally, may be a substrate-recognition component of a SCF-like ECS (Elongin-Cullin-SOCS-box protein) E3 ubiquitin-protein ligase complex which mediates the ubiquitination and subsequent proteasomal degradation of target proteins. Inhibits IFN-beta production through the IRF3 signaling pathway by targeting TBK1 via 'Lys-48'-linked ubiquitination, leading to its proteasomal degradation. The sequence is that of Ankyrin repeat and SOCS box protein 8 (ASB8) from Macaca fascicularis (Crab-eating macaque).